Consider the following 514-residue polypeptide: MLLRKSIPYIKICRDISASVRNNKEIAQKLPLSVPLPMENNSKSIEKGCPPMGRNSRVTRLPNGLKVCTEDTYGDFVTVGVAIESGCRYENGFPFGISRIVEKLAYNSSESFSSRDEVFAKLEENSGIVDCQSTRDTMMYAASCHRDGVDSVIHVLSDTIWKPIFDEQSLEQAKLTVSYENQDLPNRIEAIEILLTDWIHQAAFQNNTIGYPKFGNNSMDKIRVSDVYGFLSRAHTPQRMVVGGVGVGHDEFVSIISRHFDLNKSTWTTQPTVLPAKIPEIDESRAQYTGGELRLDTDLTKLTIGKPYPLLSHVVLGLEGCSYKDEDFVAFCVLQSLLGGGGAFSAGGPGKGMYARMYTELMNRHHWIYSAIAHNHSYSDSGVFTVTASSPPENINDALILLVHQILQLQQGVEPTELARARTQLRSHLMMNLEVRPVLFEDMVRQVLGHGDRKQPEEYAEKIEKVTNSDIIRVTERLLASKPSLVGYGDIKKLKDLRSLDQAVAKRDLKYLFN.

The transit peptide at 1–55 directs the protein to the mitochondrion; that stretch reads MLLRKSIPYIKICRDISASVRNNKEIAQKLPLSVPLPMENNSKSIEKGCPPMGRN.

Belongs to the peptidase M16 family. Heterodimer of mppa-1 (alpha) and mppb-1 (beta) subunits, forming the mitochondrial processing protease (MPP) in which mppa-1 is involved in substrate recognition and binding and mppb-1 is the catalytic subunit.

The protein resides in the mitochondrion matrix. Functionally, substrate recognition and binding subunit of the essential mitochondrial processing protease (MPP), which cleaves the mitochondrial sequence off newly imported precursors proteins. The polypeptide is Mitochondrial-processing peptidase subunit alpha (Caenorhabditis elegans).